A 445-amino-acid chain; its full sequence is Methylenetetrahydrofolate--tRNA-(uracil-5-)-methyltransferase TrmFO (445 aa).

10–15 (GGGLAG) contributes to the FAD binding site.

It belongs to the MnmG family. TrmFO subfamily. FAD serves as cofactor.

It is found in the cytoplasm. The catalysed reaction is uridine(54) in tRNA + (6R)-5,10-methylene-5,6,7,8-tetrahydrofolate + NADH + H(+) = 5-methyluridine(54) in tRNA + (6S)-5,6,7,8-tetrahydrofolate + NAD(+). It carries out the reaction uridine(54) in tRNA + (6R)-5,10-methylene-5,6,7,8-tetrahydrofolate + NADPH + H(+) = 5-methyluridine(54) in tRNA + (6S)-5,6,7,8-tetrahydrofolate + NADP(+). Functionally, catalyzes the folate-dependent formation of 5-methyl-uridine at position 54 (M-5-U54) in all tRNAs. The polypeptide is Methylenetetrahydrofolate--tRNA-(uracil-5-)-methyltransferase TrmFO (Microcystis aeruginosa (strain NIES-843 / IAM M-2473)).